A 344-amino-acid chain; its full sequence is MTTRLADIAAQAGVSEATVSRVLNGKPGVAATTRQSVLAALDVLGYERPVRLRQRSEGLVGLITPELENPIFPALAQVIGQALTRQGYTPVLATQTPGGSTEDELTEMLVDRGVAGIIYVSGLHADTTADMQRYERLRAQGVPFVLVDGFSSQVQAPFISPDDRAAMSLAVTHLVSLGHTRIGLALGPKRFVPVQRKIEGFVRTVQDQLGLSAETVEKELVQHSLYTLEGGQAAASALIGRDCTAVVCASDMMALGAIRAARQLGLDVPKDVSVVGFDDSPLIAFTDPPLTTVRKPVPAMGQAAVRTLLEEIGGTPAPHSEFVFMPELVVRGSTASAPGERGRP.

The HTH lacI-type domain maps to 1–54 (MTTRLADIAAQAGVSEATVSRVLNGKPGVAATTRQSVLAALDVLGYERPVRLRQ). The H-T-H motif DNA-binding region spans 5 to 24 (LADIAAQAGVSEATVSRVLN).

In terms of biological role, transcriptional repressor of the maltosaccharide utilization operon malEFG. In Streptomyces coelicolor (strain ATCC BAA-471 / A3(2) / M145), this protein is HTH-type transcriptional regulator MalR (malR).